The chain runs to 111 residues: MFKATARYIRVQPRKARLAAGLMRNRSVVEAQQQLSFSQMKAGRCLKKVLDSAVANAESNENVKRENLCVVEVRVDAGPMFKRVKSKSRGGRAPVLKRTSHLTVIVGERGQ.

It belongs to the universal ribosomal protein uL22 family. In terms of assembly, part of the 50S ribosomal subunit.

In terms of biological role, this protein binds specifically to 23S rRNA; its binding is stimulated by other ribosomal proteins, e.g. L4, L17, and L20. It is important during the early stages of 50S assembly. It makes multiple contacts with different domains of the 23S rRNA in the assembled 50S subunit and ribosome. Its function is as follows. The globular domain of the protein is located near the polypeptide exit tunnel on the outside of the subunit, while an extended beta-hairpin is found that lines the wall of the exit tunnel in the center of the 70S ribosome. The sequence is that of Large ribosomal subunit protein uL22 from Chlamydia muridarum (strain MoPn / Nigg).